A 493-amino-acid chain; its full sequence is Cobyric acid synthase (493 aa).

In terms of domain architecture, GATase cobBQ-type spans 255–441; sequence ELEIAVLRLP…LHGLLENGRW (187 aa). The active-site Nucleophile is C336. H433 is a catalytic residue.

Belongs to the CobB/CobQ family. CobQ subfamily.

The protein operates within cofactor biosynthesis; adenosylcobalamin biosynthesis. In terms of biological role, catalyzes amidations at positions B, D, E, and G on adenosylcobyrinic A,C-diamide. NH(2) groups are provided by glutamine, and one molecule of ATP is hydrogenolyzed for each amidation. In Synechococcus sp. (strain RCC307), this protein is Cobyric acid synthase.